We begin with the raw amino-acid sequence, 170 residues long: Ankyrin repeat-containing protein C105.02c (170 aa).

ANK repeat units follow at residues leucine 46–asparagine 76 and threonine 81–leucine 116. The disordered stretch occupies residues serine 150 to glutamate 170. The span at valine 154–glutamate 170 shows a compositional bias: acidic residues.

It is found in the cytoplasm. The protein localises to the nucleus. In Schizosaccharomyces pombe (strain 972 / ATCC 24843) (Fission yeast), this protein is Ankyrin repeat-containing protein C105.02c.